Consider the following 1071-residue polypeptide: ATP-dependent helicase/deoxyribonuclease subunit B (1071 aa).

Belongs to the helicase family. AddB/RexB type 2 subfamily. In terms of assembly, heterodimer of AddA and RexB. Requires Mg(2+) as cofactor.

Its function is as follows. The heterodimer acts as both an ATP-dependent DNA helicase and an ATP-dependent, dual-direction single-stranded exonuclease. Recognizes the chi site generating a DNA molecule suitable for the initiation of homologous recombination. This subunit has 5' -&gt; 3' nuclease activity but not helicase activity. This is ATP-dependent helicase/deoxyribonuclease subunit B from Streptococcus pyogenes serotype M6 (strain ATCC BAA-946 / MGAS10394).